The chain runs to 381 residues: 1-deoxy-D-xylulose 5-phosphate reductoisomerase (381 aa).

NADPH is bound by residues Thr-10, Gly-11, Ser-12, Ile-13, Asn-38, and Asn-121. Lys-122 contacts 1-deoxy-D-xylulose 5-phosphate. Glu-123 contacts NADPH. Asp-147 is a Mn(2+) binding site. Positions 148, 149, 173, and 196 each coordinate 1-deoxy-D-xylulose 5-phosphate. Glu-149 is a Mn(2+) binding site. Position 202 (Gly-202) interacts with NADPH. 4 residues coordinate 1-deoxy-D-xylulose 5-phosphate: Ser-209, Asn-214, Lys-215, and Glu-218. A Mn(2+)-binding site is contributed by Glu-218.

Belongs to the DXR family. Mg(2+) serves as cofactor. Requires Mn(2+) as cofactor.

The catalysed reaction is 2-C-methyl-D-erythritol 4-phosphate + NADP(+) = 1-deoxy-D-xylulose 5-phosphate + NADPH + H(+). The protein operates within isoprenoid biosynthesis; isopentenyl diphosphate biosynthesis via DXP pathway; isopentenyl diphosphate from 1-deoxy-D-xylulose 5-phosphate: step 1/6. Functionally, catalyzes the NADPH-dependent rearrangement and reduction of 1-deoxy-D-xylulose-5-phosphate (DXP) to 2-C-methyl-D-erythritol 4-phosphate (MEP). This chain is 1-deoxy-D-xylulose 5-phosphate reductoisomerase, found in Alkaliphilus oremlandii (strain OhILAs) (Clostridium oremlandii (strain OhILAs)).